The sequence spans 453 residues: Phosphoglucosamine mutase (453 aa).

Ser-102 serves as the catalytic Phosphoserine intermediate. 4 residues coordinate Mg(2+): Ser-102, Asp-244, Asp-246, and Asp-248. Ser-102 is subject to Phosphoserine.

It belongs to the phosphohexose mutase family. It depends on Mg(2+) as a cofactor. Activated by phosphorylation.

It catalyses the reaction alpha-D-glucosamine 1-phosphate = D-glucosamine 6-phosphate. Its function is as follows. Catalyzes the conversion of glucosamine-6-phosphate to glucosamine-1-phosphate. The polypeptide is Phosphoglucosamine mutase (Pelobacter propionicus (strain DSM 2379 / NBRC 103807 / OttBd1)).